A 191-amino-acid polypeptide reads, in one-letter code: NAD(P)H dehydrogenase (quinone) (191 aa).

The region spanning 4–184 (ILVIFHSITG…VAKMLGKRVA (181 aa)) is the Flavodoxin-like domain. FMN is bound by residues 10-15 (SITGNT), 83-85 (TRF), and 118-124 (SNEMPHG).

It belongs to the WrbA family. As to quaternary structure, homodimer and homotetramer; in equilibrium. FMN is required as a cofactor.

The enzyme catalyses a quinone + NADH + H(+) = a quinol + NAD(+). It catalyses the reaction a quinone + NADPH + H(+) = a quinol + NADP(+). Its function is as follows. It seems to function in response to environmental stress when various electron transfer chains are affected or when the environment is highly oxidizing. It reduces quinones to the hydroquinone state to prevent interaction of the semiquinone with O2 and production of superoxide. It prefers NADH over NADPH. The sequence is that of NAD(P)H dehydrogenase (quinone) from Archaeoglobus fulgidus (strain ATCC 49558 / DSM 4304 / JCM 9628 / NBRC 100126 / VC-16).